Reading from the N-terminus, the 336-residue chain is Mitochondrial thiamine pyrophosphate carrier 1 (336 aa).

3 Solcar repeats span residues 11-98 (ISST…VNQV), 112-202 (SSGA…VKDS), and 221-323 (TKGW…SLSI). 6 helical membrane passes run 17-37 (MLCGGIAGMVSRFCIAPLDVV), 66-86 (GVTALWKGNIPAELLYVFYGA), 118-138 (FIAGATAGAGATIATYPFDLF), 177-197 (GVSSSIISIAPYMGLFFASYG), 228-244 (TAGLCAGTASKALVFPL), and 298-315 (GFLVSLIKSAPTSAITMY).

Belongs to the mitochondrial carrier (TC 2.A.29) family.

Its subcellular location is the mitochondrion inner membrane. Mitochondrial transporter that mediates uptake of thiamine pyrophosphate (ThPP) into mitochondria. This chain is Mitochondrial thiamine pyrophosphate carrier 1 (TPC1), found in Yarrowia lipolytica (strain CLIB 122 / E 150) (Yeast).